The chain runs to 403 residues: MYRDPEAASPGAPTRDVLLVSAIITVSLSVTIVLCGLCHWCQRKLGKRYKNSLETVGTPDSGRGRGEKKAIKLPAGGKAVNTAPVPGQTPHDESDRRTETRSSVSDLVNSLTSEMLMLSPGSEEDEAHEGCSRENLGRIQFSVGYNFQESTLTVKVMKAQELPAKDFSGTSDPFVKIYLLPDKKHKLETKVKRKNLNPHWNETFLFEGFPYEKVVQRVLYLQVLDYDRFSRNDPIGEVSIPLNKVDLTQMQTFWKDLKPCSDGSGSRGELLLSLCYNPSANSIIVNIIKARNLKAMDIGGTSDPYVKVWLMYKDKRVEKKKTVTKKRNLNPIFNESFAFDIPTEKLRETTIIITVMDKDKLSRNDVIGKIYLSWKSGPGEVKHWKDMIARPRQPVAQWHQLKA.

Over 1–16 (MYRDPEAASPGAPTRD) the chain is Vesicular. A helical transmembrane segment spans residues 17–37 (VLLVSAIITVSLSVTIVLCGL). The Cytoplasmic portion of the chain corresponds to 38-403 (CHWCQRKLGK…PVAQWHQLKA (366 aa)). Position 52 is a phosphoserine (Ser-52). The interval 53–103 (LETVGTPDSGRGRGEKKAIKLPAGGKAVNTAPVPGQTPHDESDRRTETRSS) is disordered. The residue at position 58 (Thr-58) is a Phosphothreonine. Ser-61 carries the post-translational modification Phosphoserine. Residues 90 to 100 (PHDESDRRTET) show a composition bias toward basic and acidic residues. Ser-119 and Ser-122 each carry phosphoserine. 2 C2 domains span residues 135 to 255 (NLGR…TFWK) and 266 to 399 (SRGE…AQWH). Position 166 (Asp-166) interacts with Ca(2+). Residues Gly-169 and Ser-171 each carry the asymmetric dimethylarginine modification. Asp-172, Asp-225, Asp-227, Ser-230, Asp-233, Asp-297, Asp-303, Asp-357, Asp-359, Ser-362, and Asp-365 together coordinate Ca(2+).

Belongs to the synaptotagmin family. As to quaternary structure, homodimer. Can also form heterodimers with SYT6, SYT9 and SYT10. Interacts with calmodulin (CALM1, CALM2 or CALM3). Interacts with CD63; required for localization to lysosomes. Interacts with APP. Requires Ca(2+) as cofactor. In terms of processing, palmitoylated at its vesicular N-terminus; palmitoylation is required for localization to lysosome and phagocytosis in macrophages. Widely expressed. Expressed in insulin-secreting cells. Present in glucagon-secreting cells (at protein level).

It localises to the cell membrane. Its subcellular location is the presynaptic cell membrane. The protein resides in the cytoplasmic vesicle. The protein localises to the secretory vesicle. It is found in the synaptic vesicle membrane. It localises to the lysosome membrane. Its subcellular location is the phagosome membrane. The protein resides in the peroxisome membrane. The protein localises to the secretory vesicle membrane. In terms of biological role, ca(2+) sensor involved in Ca(2+)-dependent exocytosis of secretory and synaptic vesicles through Ca(2+) and phospholipid binding to the C2 domain. Ca(2+) induces binding of the C2-domains to phospholipid membranes and to assembled SNARE-complexes; both actions contribute to triggering exocytosis. SYT7 binds Ca(2+) with high affinity and slow kinetics compared to other synaptotagmins. Involved in Ca(2+)-triggered lysosomal exocytosis, a major component of the plasma membrane repair. Ca(2+)-regulated delivery of lysosomal membranes to the cell surface is also involved in the phagocytic uptake of particles by macrophages. Ca(2+)-triggered lysosomal exocytosis also plays a role in bone remodeling by regulating secretory pathways in osteoclasts and osteoblasts. Involved in cholesterol transport from lysosome to peroxisome by promoting membrane contacts between lysosomes and peroxisomes: probably acts by promoting vesicle fusion by binding phosphatidylinositol-4,5-bisphosphate on peroxisomal membranes. Acts as a key mediator of synaptic facilitation, a process also named short-term synaptic potentiation: synaptic facilitation takes place at synapses with a low initial release probability and is caused by influx of Ca(2+) into the axon terminal after spike generation, increasing the release probability of neurotransmitters. Probably mediates synaptic facilitation by directly increasing the probability of release. May also contribute to synaptic facilitation by regulating synaptic vesicle replenishment, a process required to ensure that synaptic vesicles are ready for the arrival of the next action potential: SYT7 is required for synaptic vesicle replenishment by acting as a sensor for Ca(2+) and by forming a complex with calmodulin. Also acts as a regulator of Ca(2+)-dependent insulin and glucagon secretion in beta-cells. Triggers exocytosis by promoting fusion pore opening and fusion pore expansion in chromaffin cells. Also regulates the secretion of some non-synaptic secretory granules of specialized cells. The protein is Synaptotagmin-7 of Mus musculus (Mouse).